A 126-amino-acid polypeptide reads, in one-letter code: Aspartate 1-decarboxylase 1 (126 aa).

The Schiff-base intermediate with substrate; via pyruvic acid role is filled by serine 25. Position 25 is a pyruvic acid (Ser) (serine 25). Substrate is bound at residue threonine 57. The active-site Proton donor is the tyrosine 58. Position 73–75 (73–75 (GSA)) interacts with substrate.

Belongs to the PanD family. Heterooctamer of four alpha and four beta subunits. Pyruvate serves as cofactor. Is synthesized initially as an inactive proenzyme, which is activated by self-cleavage at a specific serine bond to produce a beta-subunit with a hydroxyl group at its C-terminus and an alpha-subunit with a pyruvoyl group at its N-terminus.

Its subcellular location is the cytoplasm. The enzyme catalyses L-aspartate + H(+) = beta-alanine + CO2. Its pathway is cofactor biosynthesis; (R)-pantothenate biosynthesis; beta-alanine from L-aspartate: step 1/1. In terms of biological role, catalyzes the pyruvoyl-dependent decarboxylation of aspartate to produce beta-alanine. This is Aspartate 1-decarboxylase 1 from Polaromonas sp. (strain JS666 / ATCC BAA-500).